A 339-amino-acid polypeptide reads, in one-letter code: Nicotinate-nucleotide--dimethylbenzimidazole phosphoribosyltransferase (339 aa).

Glu-306 acts as the Proton acceptor in catalysis.

Belongs to the CobT family.

It carries out the reaction 5,6-dimethylbenzimidazole + nicotinate beta-D-ribonucleotide = alpha-ribazole 5'-phosphate + nicotinate + H(+). Its pathway is nucleoside biosynthesis; alpha-ribazole biosynthesis; alpha-ribazole from 5,6-dimethylbenzimidazole: step 1/2. Functionally, catalyzes the synthesis of alpha-ribazole-5'-phosphate from nicotinate mononucleotide (NAMN) and 5,6-dimethylbenzimidazole (DMB). The protein is Nicotinate-nucleotide--dimethylbenzimidazole phosphoribosyltransferase of Brucella abortus (strain S19).